Reading from the N-terminus, the 230-residue chain is Orotate phosphoribosyltransferase (230 aa).

5-phospho-alpha-D-ribose 1-diphosphate-binding positions include R107, K108, K111, H113, and 133 to 141 (EDLTTAGGS). T137 contributes to the orotate binding site.

This sequence belongs to the purine/pyrimidine phosphoribosyltransferase family. PyrE subfamily. In terms of assembly, homodimer. It depends on Mg(2+) as a cofactor.

It catalyses the reaction orotidine 5'-phosphate + diphosphate = orotate + 5-phospho-alpha-D-ribose 1-diphosphate. It functions in the pathway pyrimidine metabolism; UMP biosynthesis via de novo pathway; UMP from orotate: step 1/2. Functionally, catalyzes the transfer of a ribosyl phosphate group from 5-phosphoribose 1-diphosphate to orotate, leading to the formation of orotidine monophosphate (OMP). The sequence is that of Orotate phosphoribosyltransferase from Allorhizobium ampelinum (strain ATCC BAA-846 / DSM 112012 / S4) (Agrobacterium vitis (strain S4)).